The sequence spans 571 residues: Decapping 5-like protein (571 aa).

Over residues M1–P17 the composition is skewed to low complexity. Disordered regions lie at residues M1–N27, L102–Y141, L159–T187, and S258–Q305. In terms of domain architecture, Sm spans P25–P108. 2 stretches are compositionally biased toward polar residues: residues V104–I138 and T167–T187. A compositionally biased stretch (low complexity) spans S264–P279. A compositionally biased stretch (polar residues) spans S293–Q305. In terms of domain architecture, DFDF spans R419–R455. The short motif at P474 to Q489 is the FFD box element. The TFG box motif lies at Q498 to F518.

Belongs to the LSM14 family. Homodimer. Component of the decapping complex.

Its subcellular location is the cytoplasm. It localises to the P-body. Its function is as follows. As a component of the decapping complex, involved in the degradation of mRNAs. Promotes P-body formation. Translational repressor. The chain is Decapping 5-like protein (DCP5-L) from Arabidopsis thaliana (Mouse-ear cress).